The chain runs to 116 residues: S-adenosylmethionine decarboxylase proenzyme (116 aa).

Ser63 functions as the Schiff-base intermediate with substrate; via pyruvic acid in the catalytic mechanism. A Pyruvic acid (Ser); by autocatalysis modification is found at Ser63. His68 functions as the Proton acceptor; for processing activity in the catalytic mechanism. The Proton donor; for catalytic activity role is filled by Cys83.

This sequence belongs to the prokaryotic AdoMetDC family. Type 1 subfamily. As to quaternary structure, heterotetramer of two alpha and two beta chains arranged as a dimer of alpha/beta heterodimers. Pyruvate is required as a cofactor. Is synthesized initially as an inactive proenzyme. Formation of the active enzyme involves a self-maturation process in which the active site pyruvoyl group is generated from an internal serine residue via an autocatalytic post-translational modification. Two non-identical subunits are generated from the proenzyme in this reaction, and the pyruvate is formed at the N-terminus of the alpha chain, which is derived from the carboxyl end of the proenzyme. The post-translation cleavage follows an unusual pathway, termed non-hydrolytic serinolysis, in which the side chain hydroxyl group of the serine supplies its oxygen atom to form the C-terminus of the beta chain, while the remainder of the serine residue undergoes an oxidative deamination to produce ammonia and the pyruvoyl group blocking the N-terminus of the alpha chain.

The enzyme catalyses S-adenosyl-L-methionine + H(+) = S-adenosyl 3-(methylsulfanyl)propylamine + CO2. It participates in amine and polyamine biosynthesis; S-adenosylmethioninamine biosynthesis; S-adenosylmethioninamine from S-adenosyl-L-methionine: step 1/1. Its function is as follows. Catalyzes the decarboxylation of S-adenosylmethionine to S-adenosylmethioninamine (dcAdoMet), the propylamine donor required for the synthesis of the polyamines spermine and spermidine from the diamine putrescine. The protein is S-adenosylmethionine decarboxylase proenzyme of Clostridium botulinum (strain ATCC 19397 / Type A).